The following is a 356-amino-acid chain: MAGLKLQAVTKSWDGKTQVIKPLTLDVADGEFIVMVGPSGCGKSTLLRMVAGLERVTEGDIWINDQRVTEMEPKDRGIAMVFQNYALYPHMSVEENMAWGLKIRGMGKQQIAERVKEAARILELDGLLKRRPRELSGGQRQRVAMGRAIVRDPAVFLFDEPLSNLDAKLRVQMRLELQQLHRRLKTTSLYVTHDQVEAMTLAQRVMVMNGGVAEQIGTPVEVYEKPASLFVASFIGSPAMNLLTGRVNNEGTHFELDGGIELPLNGGYRQYAGRKMTLGIRPEHIVLSSQAEGGVPLVMDTLEILGADNLAHGRWGEQKLVVRLAHQERPTAGSTLWLHLAENQLHLFDGETGQRV.

One can recognise an ABC transporter domain in the interval 4–235 (LKLQAVTKSW…PASLFVASFI (232 aa)). 37-44 (GPSGCGKS) is a binding site for ATP.

The protein belongs to the ABC transporter superfamily. sn-glycerol-3-phosphate importer (TC 3.A.1.1.3) family. As to quaternary structure, the complex is composed of two ATP-binding proteins (UgpC), two transmembrane proteins (UgpA and UgpE) and a solute-binding protein (UgpB).

It localises to the cell inner membrane. It carries out the reaction sn-glycerol 3-phosphate(out) + ATP + H2O = sn-glycerol 3-phosphate(in) + ADP + phosphate + H(+). In terms of biological role, part of the ABC transporter complex UgpBAEC involved in sn-glycerol-3-phosphate (G3P) import. Responsible for energy coupling to the transport system. This chain is sn-glycerol-3-phosphate import ATP-binding protein UgpC, found in Shigella boydii serotype 4 (strain Sb227).